Here is a 351-residue protein sequence, read N- to C-terminus: tRNA (guanine(10)-N2)-dimethyltransferase (351 aa).

Residues glutamate 57–leucine 165 enclose the THUMP domain.

The protein belongs to the methyltransferase superfamily. Trm-G10 family. Monomer.

It localises to the cytoplasm. The enzyme catalyses guanosine(10) in tRNA + 2 S-adenosyl-L-methionine = N(2)-dimethylguanosine(10) in tRNA + 2 S-adenosyl-L-homocysteine + 2 H(+). Catalyzes the adenosylmethionine-dependent methylation of the exocyclic amino group (N(2)) of guanosine at position 10 of various tRNAs. Acts via a two-step process that leads to the formation of either N(2)-monomethyl (m(2)G) or N(2)-dimethylguanosine (m(2)(2)G). The chain is tRNA (guanine(10)-N2)-dimethyltransferase (trmG10) from Methanocaldococcus jannaschii (strain ATCC 43067 / DSM 2661 / JAL-1 / JCM 10045 / NBRC 100440) (Methanococcus jannaschii).